The primary structure comprises 188 residues: Pyridoxal 5'-phosphate synthase subunit PdxT (188 aa).

Residue 46–48 (GES) coordinates L-glutamine. Cysteine 78 (nucleophile) is an active-site residue. L-glutamine contacts are provided by residues arginine 105 and 134–135 (IR). Catalysis depends on charge relay system residues histidine 170 and glutamate 172.

Belongs to the glutaminase PdxT/SNO family. In the presence of PdxS, forms a dodecamer of heterodimers. Only shows activity in the heterodimer.

The enzyme catalyses aldehydo-D-ribose 5-phosphate + D-glyceraldehyde 3-phosphate + L-glutamine = pyridoxal 5'-phosphate + L-glutamate + phosphate + 3 H2O + H(+). The catalysed reaction is L-glutamine + H2O = L-glutamate + NH4(+). It functions in the pathway cofactor biosynthesis; pyridoxal 5'-phosphate biosynthesis. Its function is as follows. Catalyzes the hydrolysis of glutamine to glutamate and ammonia as part of the biosynthesis of pyridoxal 5'-phosphate. The resulting ammonia molecule is channeled to the active site of PdxS. The sequence is that of Pyridoxal 5'-phosphate synthase subunit PdxT from Thermotoga maritima (strain ATCC 43589 / DSM 3109 / JCM 10099 / NBRC 100826 / MSB8).